Here is a 126-residue protein sequence, read N- to C-terminus: MQLSLLKAKIHRATVSHSELNYEGSIAIDGLLLEAAGLYEFEKVHIWNVTNGARFTTYAIRAEHGSGIISVNGGAARYVQVGDLVIVAAFAQMSEDEAAVFRPNLVYVNAANAMTHTNHSIPTQVA.

S25 acts as the Schiff-base intermediate with substrate; via pyruvic acid in catalysis. S25 carries the pyruvic acid (Ser) modification. T57 lines the substrate pocket. The active-site Proton donor is the Y58. Substrate is bound at residue 73-75 (GGA).

Belongs to the PanD family. As to quaternary structure, heterooctamer of four alpha and four beta subunits. The cofactor is pyruvate. In terms of processing, is synthesized initially as an inactive proenzyme, which is activated by self-cleavage at a specific serine bond to produce a beta-subunit with a hydroxyl group at its C-terminus and an alpha-subunit with a pyruvoyl group at its N-terminus.

It localises to the cytoplasm. The enzyme catalyses L-aspartate + H(+) = beta-alanine + CO2. It participates in cofactor biosynthesis; (R)-pantothenate biosynthesis; beta-alanine from L-aspartate: step 1/1. Functionally, catalyzes the pyruvoyl-dependent decarboxylation of aspartate to produce beta-alanine. The polypeptide is Aspartate 1-decarboxylase (Xylella fastidiosa (strain Temecula1 / ATCC 700964)).